We begin with the raw amino-acid sequence, 265 residues long: 3-methyl-2-oxobutanoate hydroxymethyltransferase (265 aa).

Asp46 and Asp85 together coordinate Mg(2+). 3-methyl-2-oxobutanoate is bound by residues 46 to 47 (DS), Asp85, and Lys114. Position 116 (Glu116) interacts with Mg(2+). Residue Glu183 is the Proton acceptor of the active site.

This sequence belongs to the PanB family. As to quaternary structure, homodecamer; pentamer of dimers. Mg(2+) serves as cofactor.

It is found in the cytoplasm. It catalyses the reaction 3-methyl-2-oxobutanoate + (6R)-5,10-methylene-5,6,7,8-tetrahydrofolate + H2O = 2-dehydropantoate + (6S)-5,6,7,8-tetrahydrofolate. It functions in the pathway cofactor biosynthesis; coenzyme A biosynthesis. In terms of biological role, catalyzes the reversible reaction in which hydroxymethyl group from 5,10-methylenetetrahydrofolate is transferred onto alpha-ketoisovalerate to form ketopantoate. This is 3-methyl-2-oxobutanoate hydroxymethyltransferase from Pyrobaculum calidifontis (strain DSM 21063 / JCM 11548 / VA1).